The following is a 172-amino-acid chain: Shikimate kinase (172 aa).

14–19 lines the ATP pocket; the sequence is GAGKST. S18 is a binding site for Mg(2+). Substrate-binding residues include D36, R60, and G82. R120 contacts ATP. R139 contributes to the substrate binding site. Position 156 (Q156) interacts with ATP.

Belongs to the shikimate kinase family. Monomer. Requires Mg(2+) as cofactor.

The protein localises to the cytoplasm. It catalyses the reaction shikimate + ATP = 3-phosphoshikimate + ADP + H(+). It participates in metabolic intermediate biosynthesis; chorismate biosynthesis; chorismate from D-erythrose 4-phosphate and phosphoenolpyruvate: step 5/7. Functionally, catalyzes the specific phosphorylation of the 3-hydroxyl group of shikimic acid using ATP as a cosubstrate. The protein is Shikimate kinase of Vibrio campbellii (strain ATCC BAA-1116).